Reading from the N-terminus, the 473-residue chain is ATP synthase subunit beta (473 aa).

Gly158–Thr165 lines the ATP pocket.

Belongs to the ATPase alpha/beta chains family. As to quaternary structure, F-type ATPases have 2 components, CF(1) - the catalytic core - and CF(0) - the membrane proton channel. CF(1) has five subunits: alpha(3), beta(3), gamma(1), delta(1), epsilon(1). CF(0) has three main subunits: a(1), b(2) and c(9-12). The alpha and beta chains form an alternating ring which encloses part of the gamma chain. CF(1) is attached to CF(0) by a central stalk formed by the gamma and epsilon chains, while a peripheral stalk is formed by the delta and b chains.

It localises to the cell membrane. It catalyses the reaction ATP + H2O + 4 H(+)(in) = ADP + phosphate + 5 H(+)(out). Functionally, produces ATP from ADP in the presence of a proton gradient across the membrane. The catalytic sites are hosted primarily by the beta subunits. The chain is ATP synthase subunit beta from Bacillus caldotenax.